We begin with the raw amino-acid sequence, 98 residues long: Citrate lyase acyl carrier protein (98 aa).

S14 bears the O-(phosphoribosyl dephospho-coenzyme A)serine mark.

The protein belongs to the CitD family. Oligomer with a subunit composition of (alpha,beta,gamma)6.

The protein localises to the cytoplasm. Functionally, covalent carrier of the coenzyme of citrate lyase. This chain is Citrate lyase acyl carrier protein, found in Vibrio cholerae serotype O1 (strain ATCC 39315 / El Tor Inaba N16961).